Here is a 244-residue protein sequence, read N- to C-terminus: Methylthioribulose-1-phosphate dehydratase (244 aa).

Substrate is bound at residue C89. Positions 107 and 109 each coordinate Zn(2+). E130 acts as the Proton donor/acceptor in catalysis. H192 contacts Zn(2+).

This sequence belongs to the aldolase class II family. MtnB subfamily. It depends on Zn(2+) as a cofactor.

It is found in the cytoplasm. It catalyses the reaction 5-(methylsulfanyl)-D-ribulose 1-phosphate = 5-methylsulfanyl-2,3-dioxopentyl phosphate + H2O. Its pathway is amino-acid biosynthesis; L-methionine biosynthesis via salvage pathway; L-methionine from S-methyl-5-thio-alpha-D-ribose 1-phosphate: step 2/6. Its function is as follows. Catalyzes the dehydration of methylthioribulose-1-phosphate (MTRu-1-P) into 2,3-diketo-5-methylthiopentyl-1-phosphate (DK-MTP-1-P). The polypeptide is Methylthioribulose-1-phosphate dehydratase (Saccharomyces cerevisiae (strain YJM789) (Baker's yeast)).